A 990-amino-acid chain; its full sequence is MGPLVEATEFSKEQALTDAAENLLKPHFSTDATLSLLEVMESLLATVEQDLSSSVQKALHPPMRALVSADLLRNPDSDVRVSVVSCLTEIMRITAPEAPYNDEQMKDIFQVTIEAFEKLADASSRSYRKAEVILETVAKVRSSLVMLDLECDDLVLEMFQRFLKIIRPDHPQLVLVSMETIMITVIDESEEVPMDLLEILLTTVKKDSQDVSPAALTLVEKVLSSCTCKLQPCIMEALKSSGTSLDMYSPVVSSICQSEFATTQAHNDVKPKDNEADEKISEGQVVPSDSLEDKLNLGLSRKGTRSKRSARGGTRRANGDEKVITANEGLSESTDAETASGSTRKRGWKPKSLMNPEEGYSFKTSSSKKVQEKELGDSSLGKVAAKKVPLPSKVGQTNQSVVISLSSSGRARTGSRKRSRTKMEETDHDVSSVATQPAKKQTVKKTNPAKEDLTKSNVKKHEDGIKTGKSSKKEKADNGLAKTSAKKPLAETMMVKPSGKKLVHSDAKKKNSEGASMDTPIPQSSKSKKKDSRATTPATKKSEQAPKSHPKMKRIAGEEVESNTNELGEELVGKRVNVWWPLDKKFYEGVIKSYCRVKKMHQVTYSDGDVEELNLKKERFKIIEDKSSASEDKEDDLLESTPLSAFIQREKSKKRKIVSKNVEPSSSPEVRSSMQTMKKKDSVTDSIKQTKRTKGALKAVSNEPESTTGKNLKSLKKLNGEPDKTRGRTGKKQKVTQAMHRKIEKDCDEQEDLETKDEEDSLKLGKESDAEPDRMEDHQELPENHNVETKTDGEEQEAAKEPTAESKTNGEEPNAEPETDGKEHKSLKEPNAEPKSDGEEQEAAKEPNAELKTDGENQEAAKELTAERKTDEEEHKVADEVEQKSQKETNVEPEAEGEEQKSVEEPNAEPKTKVEEKESAKEQTADTKLIEKEDMSKTKGEEIDKETYSSIPETGKVGNEAEEDDQRVIKELEEESDKAEVSTTVLEVDP.

HEAT repeat units follow at residues 31-57, 58-96, 153-190, 191-228, and 232-269; these read DATLSLLEVMESLLATVEQDLSSSVQK, ALHPPMRALVSADLLRNPDSDVRVSVVSCLTEIMRITAP, DLVLEMFQRFLKIIRPDHPQLVLVSMETIMITVIDESE, EVPMDLLEILLTTVKKDSQDVSPAALTLVEKVLSSCTC, and PCIMEALKSSGTSLDMYSPVVSSICQSEFATTQAHNDV. The segment at 262–565 is disordered; the sequence is TTQAHNDVKP…AGEEVESNTN (304 aa). Residues 267–281 show a composition bias toward basic and acidic residues; the sequence is NDVKPKDNEADEKIS. Residues 302–314 show a composition bias toward basic residues; it reads KGTRSKRSARGGT. Composition is skewed to polar residues over residues 328–342 and 394–410; these read EGLSESTDAETASGS and VGQTNQSVVISLSSSGR. Composition is skewed to basic and acidic residues over residues 421 to 430, 448 to 477, and 503 to 512; these read TKMEETDHDV, PAKEDLTKSNVKKHEDGIKTGKSSKKEKAD, and VHSDAKKKNS. The short motif at 458–465 is the Nuclear localization signal 1 element; that stretch reads VKKHEDGI. 2 consecutive short sequence motifs (nuclear localization signal) follow at residues 539–546 and 583–590; these read TKKSEQAP and DKKFYEGV. A disordered region spans residues 653–966; the sequence is KKRKIVSKNV…VGNEAEEDDQ (314 aa). Over residues 662–673 the composition is skewed to low complexity; that stretch reads VEPSSSPEVRSS. 2 consecutive short sequence motifs (nuclear localization signal) follow at residues 677–684 and 715–722; these read MKKKDSVT and LKKLNGEP. A compositionally biased stretch (basic residues) spans 727–742; it reads GRTGKKQKVTQAMHRK. Over residues 746–760 the composition is skewed to acidic residues; it reads DCDEQEDLETKDEED. Composition is skewed to basic and acidic residues over residues 761 to 810, 819 to 890, and 898 to 947; these read SLKL…KTNG, TDGK…KETN, and EEQK…DKET.

This sequence belongs to the PDS5 family. In terms of assembly, interacts with the cohesin complex.

Its subcellular location is the nucleus. Functionally, cohesin cofactor dispensable during the meiotic division but playing an important role in DNA repair by homologous recombination (HR) probably by helping SMC5/SMC6 complex. Regulator of sister chromatid cohesion in mitosis which may stabilize cohesin complex association with chromatin. May couple sister chromatid cohesion during mitosis to DNA replication. Cohesion ensures that chromosome partitioning is accurate in both meiotic and mitotic cells and plays an important role in DNA repair. The chain is Sister chromatid cohesion protein PDS5 homolog E from Arabidopsis thaliana (Mouse-ear cress).